A 230-amino-acid polypeptide reads, in one-letter code: Movement and silencing protein TGBp1 (230 aa).

The 114-residue stretch at 1-114 (MDSIINALTS…GLALRPHFIK (114 aa)) folds into the (+)RNA virus helicase ATP-binding domain. The 116-residue stretch at 115-230 (SVSHRLCPAT…VRSPPPHPSH (116 aa)) folds into the (+)RNA virus helicase C-terminal domain.

The protein belongs to the Tymovirales TGBp1 protein family. Homodimer and homooligomer. Interacts with capsid protein. Interacts with host AGO1; this interaction targets the host protein for degradation, thereby suppressing the antiviral RNA silencing.

The protein localises to the host cytoplasm. Functionally, transports viral genome to neighboring plant cells directly through plasmosdesmata, without any budding. The movement protein allows efficient cell to cell propagation, by bypassing the host cell wall barrier. Increases plasmodesma size exclusion limit. Acts as a suppressor of RNA-mediated gene silencing, also known as post-transcriptional gene silencing (PTGS), a mechanism of plant viral defense that limits the accumulation of viral RNAs. This chain is Movement and silencing protein TGBp1, found in Plantago asiatica (P1AMV).